A 333-amino-acid chain; its full sequence is HTH-type transcriptional regulator CbbR (333 aa).

In terms of domain architecture, HTH lysR-type spans 5 to 62; that stretch reads WTLRQLRLVALAAASGSYAKAAQDMGLSPPAVTAQMKALEEDIGVPMFERVDGRLRPT. The H-T-H motif DNA-binding region spans 22–41; it reads YAKAAQDMGLSPPAVTAQMK.

It belongs to the LysR transcriptional regulatory family.

Functionally, transcriptional activator for the cbb operon (cbbLSXFP) for RuBisCO and other Calvin cycle genes. Binds specifically to two binding sites in the cbbR-cbbL intergenic region. This chain is HTH-type transcriptional regulator CbbR (cbbR), found in Xanthobacter flavus.